The primary structure comprises 508 residues: MKLAYWMYAGPAHIGTLRVATSFKNVHAIMHAPLGDDYFNVMRSMLSRERDFTPVTTSVVDRHVLARGSQEKVVDNITRKDAEERPDLIVLTPTCTSSILQEDLENFVERAQLEAKGDVLLADVNHYRVNELQAGDRTLHQIVQYYIEKARKKGELPEGKTAKPSVNIIGISTLGFHNNHDCTELKRLMADLGIEVNAVIPEGASVHELKNLPRAWFNLVPYRELGLMTANYLEKEFGTPCIDIVPMGVVETARCIRKIQEVINAQGADVNYEDYINEQTLYVSQAAWFSRSIDCQNLTGKKAVVFGDNTHAAALTKILSREMGIHVVWAGTYCKYDADWFREQVSEYCDEVLITEDHGEIGDAIARVEPSAIFGTQMERHVGKRLDIPCGVIAAPIHVQNFPIGYKPFLGYEGTNQITDLIYNSFTLGMEDHLLEIFGGHDTKEVITKGISAGSDLSWTKDGLAELNKIPGFVRGKVKRNTEKFARDRGFKDISAEVLYAAKEAVGA.

A [4Fe-4S] cluster-binding site is contributed by aspartate 36. The Proton donor role is filled by aspartate 294. 429-430 (GM) provides a ligand contact to substrate.

This sequence belongs to the ChlB/BchB/BchZ family. As to quaternary structure, protochlorophyllide reductase is composed of three subunits; ChlL, ChlN and ChlB. Forms a heterotetramer of two ChlB and two ChlN subunits. [4Fe-4S] cluster is required as a cofactor.

The catalysed reaction is chlorophyllide a + oxidized 2[4Fe-4S]-[ferredoxin] + 2 ADP + 2 phosphate = protochlorophyllide a + reduced 2[4Fe-4S]-[ferredoxin] + 2 ATP + 2 H2O. It functions in the pathway porphyrin-containing compound metabolism; chlorophyll biosynthesis (light-independent). In terms of biological role, component of the dark-operative protochlorophyllide reductase (DPOR) that uses Mg-ATP and reduced ferredoxin to reduce ring D of protochlorophyllide (Pchlide) to form chlorophyllide a (Chlide). This reaction is light-independent. The NB-protein (ChlN-ChlB) is the catalytic component of the complex. The protein is Light-independent protochlorophyllide reductase subunit B of Nostoc sp. (strain PCC 7120 / SAG 25.82 / UTEX 2576).